The primary structure comprises 298 residues: Glycine--tRNA ligase alpha subunit (298 aa).

Belongs to the class-II aminoacyl-tRNA synthetase family. In terms of assembly, tetramer of two alpha and two beta subunits.

The protein localises to the cytoplasm. It catalyses the reaction tRNA(Gly) + glycine + ATP = glycyl-tRNA(Gly) + AMP + diphosphate. The chain is Glycine--tRNA ligase alpha subunit from Helicobacter pylori (strain G27).